We begin with the raw amino-acid sequence, 668 residues long: Chitin synthase 8 (668 aa).

Polar residues predominate over residues 1 to 26 (MTSRMPTSGHRTSSSSSERGNMSVQQ). The tract at residues 1 to 62 (MTSRMPTSGH…PAPLRPGWTL (62 aa)) is disordered. N-linked (GlcNAc...) asparagine glycosylation is found at asparagine 21, asparagine 98, and asparagine 101. Helical transmembrane passes span 136–156 (WSLIIGLAGINGALIYIGWKY) and 162–182 (FFLVLLSSNTVLQSFMCICII). 2 N-linked (GlcNAc...) asparagine glycosylation sites follow: asparagine 216 and asparagine 476. The next 4 membrane-spanning stretches (helical) occupy residues 522–542 (WALGSISNEFVMIFRPGIILI), 548–568 (LIAVITWAITPFIIAAFVELL), 583–603 (VFLGLICVLFFRYLYSFCIGF), and 615–635 (YFAGYVMHLFTSPFMNIIILV).

It belongs to the chitin synthase family. Class VIII subfamily.

It is found in the cell membrane. The protein localises to the cell septum. The catalysed reaction is [(1-&gt;4)-N-acetyl-beta-D-glucosaminyl](n) + UDP-N-acetyl-alpha-D-glucosamine = [(1-&gt;4)-N-acetyl-beta-D-glucosaminyl](n+1) + UDP + H(+). In terms of biological role, polymerizes chitin, a structural polymer of the cell wall and septum, by transferring the sugar moiety of UDP-GlcNAc to the non-reducing end of the growing chitin polymer. Participated in the development of cell wall and plays a critical role in fungal response to environmental stresses. Necessary for pathogenicity and deoxinivalenol (DON) production. The chain is Chitin synthase 8 from Gibberella zeae (strain ATCC MYA-4620 / CBS 123657 / FGSC 9075 / NRRL 31084 / PH-1) (Wheat head blight fungus).